Consider the following 332-residue polypeptide: L-lactate dehydrogenase A chain (332 aa).

NAD(+) contacts are provided by residues 29 to 57 (GAVG…IEDK) and arginine 99. Residues arginine 106, asparagine 138, and arginine 169 each contribute to the substrate site. Residue asparagine 138 participates in NAD(+) binding. Histidine 193 (proton acceptor) is an active-site residue. Threonine 248 contacts substrate.

The protein belongs to the LDH/MDH superfamily. LDH family. In terms of assembly, homotetramer.

It is found in the cytoplasm. It catalyses the reaction (S)-lactate + NAD(+) = pyruvate + NADH + H(+). Its pathway is fermentation; pyruvate fermentation to lactate; (S)-lactate from pyruvate: step 1/1. In terms of biological role, interconverts simultaneously and stereospecifically pyruvate and lactate with concomitant interconversion of NADH and NAD(+). In Sceloporus woodi (Florida scrub lizard), this protein is L-lactate dehydrogenase A chain (LDHA).